Reading from the N-terminus, the 148-residue chain is Cytochrome c-type biogenesis protein CcmE (148 aa).

Residues 1–7 (MKPRSKR) lie on the Cytoplasmic side of the membrane. Residues 8 to 28 (LLLVAGAVALLVGAVALVLNA) form a helical; Signal-anchor for type II membrane protein membrane-spanning segment. The Periplasmic segment spans residues 29–148 (FQQNLVFFHT…AQKAAQTVQQ (120 aa)). Heme contacts are provided by His-123 and Tyr-127.

It belongs to the CcmE/CycJ family.

It localises to the cell inner membrane. Its function is as follows. Heme chaperone required for the biogenesis of c-type cytochromes. Transiently binds heme delivered by CcmC and transfers the heme to apo-cytochromes in a process facilitated by CcmF and CcmH. This Aromatoleum aromaticum (strain DSM 19018 / LMG 30748 / EbN1) (Azoarcus sp. (strain EbN1)) protein is Cytochrome c-type biogenesis protein CcmE.